We begin with the raw amino-acid sequence, 427 residues long: Enolase (427 aa).

Gln-163 is a (2R)-2-phosphoglycerate binding site. Glu-205 acts as the Proton donor in catalysis. Asp-242, Glu-285, and Asp-312 together coordinate Mg(2+). The (2R)-2-phosphoglycerate site is built by Lys-337, Arg-366, Ser-367, and Lys-388. The active-site Proton acceptor is the Lys-337.

The protein belongs to the enolase family. Mg(2+) is required as a cofactor.

It localises to the cytoplasm. The protein localises to the secreted. Its subcellular location is the cell surface. It carries out the reaction (2R)-2-phosphoglycerate = phosphoenolpyruvate + H2O. It participates in carbohydrate degradation; glycolysis; pyruvate from D-glyceraldehyde 3-phosphate: step 4/5. Functionally, catalyzes the reversible conversion of 2-phosphoglycerate (2-PG) into phosphoenolpyruvate (PEP). It is essential for the degradation of carbohydrates via glycolysis. The sequence is that of Enolase from Herminiimonas arsenicoxydans.